Consider the following 167-residue polypeptide: Peptide deformylase (167 aa).

The Fe cation site is built by cysteine 91 and histidine 133. The active site involves glutamate 134. Histidine 137 contacts Fe cation.

It belongs to the polypeptide deformylase family. Requires Fe(2+) as cofactor.

It catalyses the reaction N-terminal N-formyl-L-methionyl-[peptide] + H2O = N-terminal L-methionyl-[peptide] + formate. Removes the formyl group from the N-terminal Met of newly synthesized proteins. Requires at least a dipeptide for an efficient rate of reaction. N-terminal L-methionine is a prerequisite for activity but the enzyme has broad specificity at other positions. This is Peptide deformylase from Buchnera aphidicola subsp. Schizaphis graminum (strain Sg).